The sequence spans 581 residues: Leucine-rich repeat-containing protein 47 (581 aa).

7 LRR repeats span residues 78–97 (QLHS…SPEL), 102–123 (ALRV…EGLG), 132–154 (QLQS…ARCA), 156–177 (RLQS…LFRP), 182–204 (LLSE…AHLA), 205–227 (SLKT…ADCP), and 228–248 (KLKE…EKMV). A disordered region spans residues 262-301 (AGGRGGRSKGRQEASEKEDRKKRRERKQHRESGEGEEEVA). A compositionally biased stretch (basic and acidic residues) spans 271–280 (GRQEASEKED). Phosphoserine is present on residues Ser-314, Ser-430, and Ser-519. The stretch at 401–436 (LGRKEAKAKELVRQLQLEAEEQRKQKKRQSVSGLHR) forms a coiled coil.

The sequence is that of Leucine-rich repeat-containing protein 47 (Lrrc47) from Mus musculus (Mouse).